Reading from the N-terminus, the 363-residue chain is tRNA-specific 2-thiouridylase MnmA (363 aa).

ATP-binding positions include 13-20 (GLSGGVDS) and M39. Positions 99–101 (NPD) are interaction with target base in tRNA. Catalysis depends on C104, which acts as the Nucleophile. C104 and C200 are oxidised to a cystine. Residue G128 coordinates ATP. Residues 150–152 (KDQ) form an interaction with tRNA region. C200 acts as the Cysteine persulfide intermediate in catalysis. Residues 310–311 (RY) are interaction with tRNA.

This sequence belongs to the MnmA/TRMU family.

Its subcellular location is the cytoplasm. The catalysed reaction is S-sulfanyl-L-cysteinyl-[protein] + uridine(34) in tRNA + AH2 + ATP = 2-thiouridine(34) in tRNA + L-cysteinyl-[protein] + A + AMP + diphosphate + H(+). Its function is as follows. Catalyzes the 2-thiolation of uridine at the wobble position (U34) of tRNA, leading to the formation of s(2)U34. The chain is tRNA-specific 2-thiouridylase MnmA from Ruthia magnifica subsp. Calyptogena magnifica.